The following is a 285-amino-acid chain: Nucleotide-binding protein PSPTO_4456 (285 aa).

Residue 8–15 (GRSGSGKS) coordinates ATP. 60–63 (DARN) contacts GTP.

It belongs to the RapZ-like family.

In terms of biological role, displays ATPase and GTPase activities. The protein is Nucleotide-binding protein PSPTO_4456 of Pseudomonas syringae pv. tomato (strain ATCC BAA-871 / DC3000).